The sequence spans 250 residues: 5'-nucleotidase SurE (250 aa).

Residues Asp8, Asp9, Ser39, and Asn92 each contribute to the a divalent metal cation site.

This sequence belongs to the SurE nucleotidase family. The cofactor is a divalent metal cation.

It localises to the cytoplasm. The catalysed reaction is a ribonucleoside 5'-phosphate + H2O = a ribonucleoside + phosphate. In terms of biological role, nucleotidase that shows phosphatase activity on nucleoside 5'-monophosphates. The polypeptide is 5'-nucleotidase SurE (Vibrio cholerae serotype O1 (strain ATCC 39315 / El Tor Inaba N16961)).